The chain runs to 354 residues: Probable butyrate kinase (354 aa).

It belongs to the acetokinase family.

Its subcellular location is the cytoplasm. The enzyme catalyses butanoate + ATP = butanoyl phosphate + ADP. The sequence is that of Probable butyrate kinase from Phocaeicola vulgatus (strain ATCC 8482 / DSM 1447 / JCM 5826 / CCUG 4940 / NBRC 14291 / NCTC 11154) (Bacteroides vulgatus).